Consider the following 284-residue polypeptide: Pantothenate synthetase (284 aa).

Residue 30–37 (MGNLHDGH) coordinates ATP. His37 serves as the catalytic Proton donor. Gln61 contributes to the (R)-pantoate binding site. Residue Gln61 coordinates beta-alanine. Position 149 to 152 (149 to 152 (GEKD)) interacts with ATP. A (R)-pantoate-binding site is contributed by Gln155. Residues Ile178 and 186-189 (LSSR) each bind ATP.

Belongs to the pantothenate synthetase family. As to quaternary structure, homodimer.

It localises to the cytoplasm. It catalyses the reaction (R)-pantoate + beta-alanine + ATP = (R)-pantothenate + AMP + diphosphate + H(+). Its pathway is cofactor biosynthesis; (R)-pantothenate biosynthesis; (R)-pantothenate from (R)-pantoate and beta-alanine: step 1/1. Catalyzes the condensation of pantoate with beta-alanine in an ATP-dependent reaction via a pantoyl-adenylate intermediate. The protein is Pantothenate synthetase of Salmonella newport (strain SL254).